Here is a 210-residue protein sequence, read N- to C-terminus: Thymidylate kinase (210 aa).

An ATP-binding site is contributed by 10–17; the sequence is GPEGAGKS.

It belongs to the thymidylate kinase family.

It carries out the reaction dTMP + ATP = dTDP + ADP. In terms of biological role, phosphorylation of dTMP to form dTDP in both de novo and salvage pathways of dTTP synthesis. The polypeptide is Thymidylate kinase (Pseudomonas syringae pv. tomato (strain ATCC BAA-871 / DC3000)).